A 594-amino-acid chain; its full sequence is Arginine--tRNA ligase (594 aa).

Positions 139–149 (ANPTGPLHVGH) match the 'HIGH' region motif.

It belongs to the class-I aminoacyl-tRNA synthetase family. As to quaternary structure, monomer.

Its subcellular location is the cytoplasm. It carries out the reaction tRNA(Arg) + L-arginine + ATP = L-arginyl-tRNA(Arg) + AMP + diphosphate. This is Arginine--tRNA ligase from Burkholderia mallei (strain NCTC 10247).